We begin with the raw amino-acid sequence, 143 residues long: Rheacalcin-2 (143 aa).

Intrachain disulfides connect C6–C17, C34–C139, and C114–C131. Residues 13 to 140 (FDGRCFGFFP…CSDRKPFICE (128 aa)) enclose the C-type lectin domain. 2 positions are modified to phosphoserine: S66 and S68.

The protein resides in the secreted. It localises to the extracellular space. The protein localises to the extracellular matrix. This Rhea americana (Greater rhea) protein is Rheacalcin-2.